The primary structure comprises 329 residues: Putative glucose-6-phosphate 1-epimerase (329 aa).

Residues 1-13 (MAAPAPAGAAASP) are compositionally biased toward low complexity. A disordered region spans residues 1–20 (MAAPAPAGAAASPSPKPQLP). Residues Arg82, Gln100, and Arg105 each contribute to the substrate site. His183 is a catalytic residue. A substrate-binding site is contributed by Asp228. Residue Glu287 is part of the active site.

It belongs to the glucose-6-phosphate 1-epimerase family.

It carries out the reaction alpha-D-glucose 6-phosphate = beta-D-glucose 6-phosphate. The polypeptide is Putative glucose-6-phosphate 1-epimerase (Cenchrus ciliaris (Buffelgrass)).